The sequence spans 101 residues: Early E3A 11.6 kDa glycoprotein (101 aa).

An N-linked (GlcNAc...) asparagine; by host glycan is attached at N14. A helical transmembrane segment spans residues M41–L62.

This sequence belongs to the adenoviridae E3A-1 family. N-glycosylated and probably also O-glycosylated.

It is found in the host nucleus membrane. The protein is Early E3A 11.6 kDa glycoprotein of Human adenovirus C serotype 6 (HAdV-6).